The following is a 408-amino-acid chain: Imidazolonepropionase (408 aa).

His-74 and His-76 together coordinate Fe(3+). Residues His-74 and His-76 each coordinate Zn(2+). Arg-83, Tyr-146, and His-179 together coordinate 4-imidazolone-5-propanoate. Tyr-146 is a binding site for N-formimidoyl-L-glutamate. His-244 contacts Fe(3+). His-244 lines the Zn(2+) pocket. Gln-247 contributes to the 4-imidazolone-5-propanoate binding site. Fe(3+) is bound at residue Asp-319. Residue Asp-319 coordinates Zn(2+). The N-formimidoyl-L-glutamate site is built by Asn-321 and Gly-323. Thr-324 serves as a coordination point for 4-imidazolone-5-propanoate.

This sequence belongs to the metallo-dependent hydrolases superfamily. HutI family. Zn(2+) serves as cofactor. The cofactor is Fe(3+).

It is found in the cytoplasm. The enzyme catalyses 4-imidazolone-5-propanoate + H2O = N-formimidoyl-L-glutamate. The protein operates within amino-acid degradation; L-histidine degradation into L-glutamate; N-formimidoyl-L-glutamate from L-histidine: step 3/3. Functionally, catalyzes the hydrolytic cleavage of the carbon-nitrogen bond in imidazolone-5-propanoate to yield N-formimidoyl-L-glutamate. It is the third step in the universal histidine degradation pathway. The sequence is that of Imidazolonepropionase from Ralstonia nicotianae (strain ATCC BAA-1114 / GMI1000) (Ralstonia solanacearum).